Consider the following 125-residue polypeptide: Small ribosomal subunit protein eS8 (125 aa).

It belongs to the eukaryotic ribosomal protein eS8 family. As to quaternary structure, part of the 30S ribosomal subunit.

This chain is Small ribosomal subunit protein eS8, found in Methanosphaerula palustris (strain ATCC BAA-1556 / DSM 19958 / E1-9c).